The following is a 310-amino-acid chain: Homoserine kinase (310 aa).

85–95 (PKGLGLGSSGA) lines the ATP pocket.

The protein belongs to the GHMP kinase family. Homoserine kinase subfamily.

It is found in the cytoplasm. The catalysed reaction is L-homoserine + ATP = O-phospho-L-homoserine + ADP + H(+). It functions in the pathway amino-acid biosynthesis; L-threonine biosynthesis; L-threonine from L-aspartate: step 4/5. Functionally, catalyzes the ATP-dependent phosphorylation of L-homoserine to L-homoserine phosphate. The sequence is that of Homoserine kinase from Thermoplasma acidophilum (strain ATCC 25905 / DSM 1728 / JCM 9062 / NBRC 15155 / AMRC-C165).